Reading from the N-terminus, the 1006-residue chain is MIAQLSTVAPSANYPEFLEALRNSGFRGQISADYATRTVLATDNSIYQRLPQAAVFPLDADDVARVATLMGEPRFQQVKLTPRGGGTGTNGQSLTDGIVVDLSRHMNNILEINVEERWVRVQAGTVKDQLNAALKPHGLFFAPELSTSNRATVGGMINTDASGQGSCTYGKTRDHVLELHSVLLGGERLHSLPIDDAALEQACAAPGRVGEVYRMAREIQETQAELIETTFPKLNRCLTGYDLAHLRDEQGRFNLNSVLCGAEGSLGYVVEAKLNVLPIPKYAVLVNVRYTSFMDALRDANALMAHKPLSIETVDSKVLMLAMKDIVWHSVAEYFPADPERPTLGINLVEFCGDEPAEVNAKVQAFIQHLQSDTSVERLGHTLAEGAEAVTRVYTMRKRSVGLLGNVEGEVRPQPFVEDTAVPPEQLADYIADFRALLDGYGLAYGMFGHVDAGVLHVRPALDMKDPVQAALVKPISDAVAALTKRYGGLLWGEHGKGLRSEYVPEYFGELYPALQRLKGAFDPHNQLNPGKICTPLGSAEGLTPVDGVTLRGDLDRTIDERVWQDFPSAVHCNGNGACYNYDPNDAMCPSWKATRERQHSPKGRASLMREWLRLQGEANIDVLAAARNKVSWLKGLPARLRNNRARNQGQEDFSHEVYDAMAGCLACKSCAGQCPIKVNVPDFRSRFLELYHGRYQRPLRDYLIGSLEFTIPYLAHAPGLYNAVMGSKWVSQLLADKVGMVDSPLISRFNFQATLTRCRVGMATVPALRELTPAQRERSIVLVQDAFTRYFETPLLSAFIDLAHRLGHRVFLAPYSANGKPLHVQGFLGAFAKAAIRNATQLKALADCGVPLVGLDPAMTLVYRQEYQKVPGLEGCPKVLLPQEWLMDVLPEQAPAAPGSFRLMAHCTEKTNVPASTRQWEQVFARLGLKLVTEATGCCGMSGTYGHEARNQETSRTIFEQSWATKLDKDGEPLATGYSCRSQVKRMTERKMRHPLEVVLQYAQR.

Residues 47 to 279 (YQRLPQAAVF…VEAKLNVLPI (233 aa)) form the FAD-binding PCMH-type domain. (R)-2-hydroxyglutarate is bound by residues Arg-397 and His-495. Residues 655–687 (SHEVYDAMAGCLACKSCAGQCPIKVNVPDFRSR) enclose the 4Fe-4S ferredoxin-type domain. [4Fe-4S] cluster is bound by residues Cys-665, Cys-668, Cys-671, and Cys-675.

It in the N-terminal section; belongs to the FAD-binding oxidoreductase/transferase type 4 family. It depends on [4Fe-4S] cluster as a cofactor. FAD is required as a cofactor.

The catalysed reaction is (R)-2-hydroxyglutarate + A = 2-oxoglutarate + AH2. It functions in the pathway amino-acid degradation. Catalyzes the oxidation of D-2-hydroxyglutarate (D-2-HGA) to 2-oxoglutarate. Is involved in a D-lysine catabolic pathway. In Pseudomonas putida (strain ATCC 47054 / DSM 6125 / CFBP 8728 / NCIMB 11950 / KT2440), this protein is D-2-hydroxyglutarate dehydrogenase.